We begin with the raw amino-acid sequence, 307 residues long: GTPase Era (307 aa).

The Era-type G domain occupies 17–186; it reads RCGFVAIVGR…LELLKPYLPE (170 aa). Residues 25-32 are G1; it reads GRPNVGKS. 25 to 32 serves as a coordination point for GTP; it reads GRPNVGKS. Positions 51–55 are G2; the sequence is QTTRN. Positions 72 to 75 are G3; it reads DTPG. Residues 72–76 and 133–136 each bind GTP; these read DTPGF and NKID. A G4 region spans residues 133-136; it reads NKID. Residues 165 to 167 form a G5 region; sequence VSA. The KH type-2 domain maps to 217-293; the sequence is LGEELPYAMN…FLKVWVKVKS (77 aa).

The protein belongs to the TRAFAC class TrmE-Era-EngA-EngB-Septin-like GTPase superfamily. Era GTPase family. Monomer.

Its subcellular location is the cytoplasm. It localises to the cell inner membrane. In terms of biological role, an essential GTPase that binds both GDP and GTP, with rapid nucleotide exchange. Plays a role in 16S rRNA processing and 30S ribosomal subunit biogenesis and possibly also in cell cycle regulation and energy metabolism. This chain is GTPase Era, found in Neisseria meningitidis serogroup C / serotype 2a (strain ATCC 700532 / DSM 15464 / FAM18).